The following is a 233-amino-acid chain: Small ribosomal subunit protein uS2 (233 aa).

It belongs to the universal ribosomal protein uS2 family.

This is Small ribosomal subunit protein uS2 from Clostridium novyi (strain NT).